Here is a 196-residue protein sequence, read N- to C-terminus: Thymidine kinase (196 aa).

Residues 9-16 (GTMNSGKS) and 85-88 (DEAQ) each bind ATP. The active-site Proton acceptor is Glu86. Cys143, Cys146, Cys180, and His183 together coordinate Zn(2+).

This sequence belongs to the thymidine kinase family. As to quaternary structure, homotetramer.

It is found in the cytoplasm. The catalysed reaction is thymidine + ATP = dTMP + ADP + H(+). This is Thymidine kinase from Streptococcus thermophilus (strain CNRZ 1066).